The primary structure comprises 153 residues: UPF0225 protein ETA_15740 (153 aa).

It belongs to the UPF0225 family.

This chain is UPF0225 protein ETA_15740, found in Erwinia tasmaniensis (strain DSM 17950 / CFBP 7177 / CIP 109463 / NCPPB 4357 / Et1/99).